Consider the following 85-residue polypeptide: Putative defensin-like protein 258 (85 aa).

An N-terminal signal peptide occupies residues 1-25 (MINVSLKRSLLIFISVITSNIGSEA). Cystine bridges form between C57–C75, C63–C82, and C67–C84.

It belongs to the DEFL family.

It is found in the secreted. The chain is Putative defensin-like protein 258 from Arabidopsis thaliana (Mouse-ear cress).